The sequence spans 835 residues: Phenylalanine--tRNA ligase beta subunit (835 aa).

Residues 44–160 form the tRNA-binding domain; the sequence is PATTGPLVLG…ESGQPGDDAR (117 aa). The B5 domain occupies 419-494; it reads PTMPSITMPV…RLEGLEAIPT (76 aa). D472, D478, E481, and E482 together coordinate Mg(2+). The FDX-ACB domain occupies 741-834; it reads SAFPALHQDI…AKERLGAEMR (94 aa).

It belongs to the phenylalanyl-tRNA synthetase beta subunit family. Type 1 subfamily. Tetramer of two alpha and two beta subunits. Requires Mg(2+) as cofactor.

The protein resides in the cytoplasm. It carries out the reaction tRNA(Phe) + L-phenylalanine + ATP = L-phenylalanyl-tRNA(Phe) + AMP + diphosphate + H(+). This chain is Phenylalanine--tRNA ligase beta subunit, found in Corynebacterium efficiens (strain DSM 44549 / YS-314 / AJ 12310 / JCM 11189 / NBRC 100395).